Here is a 1005-residue protein sequence, read N- to C-terminus: Small G protein signaling modulator 2 (1005 aa).

The region spanning 34–191 (HEDSSHIIAL…EYTKLKTADH (158 aa)) is the RUN domain. Disordered stretches follow at residues 95 to 121 (QAEG…KAPA) and 205 to 236 (HRIR…SASE). S402 and L444 each carry phosphoserine. In terms of domain architecture, Rab-GAP TBC spans 566–938 (GVEHEIRKDV…AVWEVIWAAR (373 aa)). Disordered regions lie at residues 657–687 (FISV…AGTP) and 729–761 (GFED…QETL). The segment covering 672-681 (EDSKPKREQE) has biased composition (basic and acidic residues). Residues 730 to 740 (FEDDGAGEDGS) are compositionally biased toward acidic residues.

This sequence belongs to the RUTBC family. As to quaternary structure, interacts with RAB4A, RAB11A, RAP1A, RAP1B, RAP2A and RAP2B. No interaction with RAB27A. Interacts with RAB9A. In terms of tissue distribution, widely expressed.

It localises to the cytoplasm. Its subcellular location is the melanosome. In terms of biological role, possesses GTPase activator activity towards RAB32, RAB33B and RAB38. Regulates the trafficking of melanogenic enzymes TYR, TYRP1 and DCT/TYRP2 to melanosomes in melanocytes by inactivating RAB32 and RAB38. Inhibits RAB32 and RAB38 activation both directly by promoting their GTPase activity and indirectly by disrupting the RAB9A-HPS4 interaction which is required for RAB32/38 activation. The polypeptide is Small G protein signaling modulator 2 (Sgsm2) (Mus musculus (Mouse)).